We begin with the raw amino-acid sequence, 137 residues long: Fluoride-specific ion channel FluC 1 (137 aa).

The next 4 membrane-spanning stretches (helical) occupy residues 4–24, 37–57, 67–87, and 98–118; these read LIYI…YYLG, LATL…TTYI, VITG…TFSV, and WGIA…MSGL. 2 residues coordinate Na(+): Gly-77 and Thr-80.

It belongs to the fluoride channel Fluc/FEX (TC 1.A.43) family.

It is found in the cell membrane. The catalysed reaction is fluoride(in) = fluoride(out). With respect to regulation, na(+) is not transported, but it plays an essential structural role and its presence is essential for fluoride channel function. Functionally, fluoride-specific ion channel. Important for reducing fluoride concentration in the cell, thus reducing its toxicity. This Bacillus cereus (strain ZK / E33L) protein is Fluoride-specific ion channel FluC 1.